A 366-amino-acid chain; its full sequence is ATP-dependent 6-phosphofructokinase 2 (366 aa).

ATP-binding positions include Gly15, 78-79 (KD), and 119-122 (GDGT). Asp120 contacts Mg(2+). Residues 142 to 144 (TID), Arg179, 186 to 188 (MGR), Glu239, Arg284, and 290 to 293 (HIQR) contribute to the substrate site. Residue Asp144 is the Proton acceptor of the active site.

This sequence belongs to the phosphofructokinase type A (PFKA) family. Mixed-substrate PFK group III subfamily. As to quaternary structure, homodimer or homotetramer. Requires Mg(2+) as cofactor.

It localises to the cytoplasm. The enzyme catalyses beta-D-fructose 6-phosphate + ATP = beta-D-fructose 1,6-bisphosphate + ADP + H(+). Its pathway is carbohydrate degradation; glycolysis; D-glyceraldehyde 3-phosphate and glycerone phosphate from D-glucose: step 3/4. Subject to allosteric activation by ADP and other diphosphonucleosides, and inhibition by phosphoenolpyruvate. Its function is as follows. Catalyzes the phosphorylation of D-fructose 6-phosphate to fructose 1,6-bisphosphate by ATP, the first committing step of glycolysis. In Clostridium perfringens (strain 13 / Type A), this protein is ATP-dependent 6-phosphofructokinase 2.